Reading from the N-terminus, the 85-residue chain is Large ribosomal subunit protein bL27 (85 aa).

The disordered stretch occupies residues 1–21; that stretch reads MAHKKGLGSTKNGRDSQAKRL.

It belongs to the bacterial ribosomal protein bL27 family.

The protein is Large ribosomal subunit protein bL27 of Thermus thermophilus (strain ATCC BAA-163 / DSM 7039 / HB27).